A 108-amino-acid polypeptide reads, in one-letter code: Ribonuclease P protein component (108 aa).

Belongs to the RnpA family. As to quaternary structure, consists of a catalytic RNA component (M1 or rnpB) and a protein subunit.

The enzyme catalyses Endonucleolytic cleavage of RNA, removing 5'-extranucleotides from tRNA precursor.. Its function is as follows. RNaseP catalyzes the removal of the 5'-leader sequence from pre-tRNA to produce the mature 5'-terminus. It can also cleave other RNA substrates such as 4.5S RNA. The protein component plays an auxiliary but essential role in vivo by binding to the 5'-leader sequence and broadening the substrate specificity of the ribozyme. The chain is Ribonuclease P protein component from Campylobacter jejuni subsp. doylei (strain ATCC BAA-1458 / RM4099 / 269.97).